The following is a 160-amino-acid chain: Large ribosomal subunit protein uL15 (160 aa).

The segment covering 1–14 (MKLNDISDNPGSSK) has biased composition (polar residues). Positions 1-35 (MKLNDISDNPGSSKSRMRVGRGIGSGKGKTCGRGV) are disordered. Gly residues predominate over residues 21-35 (RGIGSGKGKTCGRGV).

It belongs to the universal ribosomal protein uL15 family. As to quaternary structure, part of the 50S ribosomal subunit.

Functionally, binds to the 23S rRNA. In Beijerinckia indica subsp. indica (strain ATCC 9039 / DSM 1715 / NCIMB 8712), this protein is Large ribosomal subunit protein uL15.